Reading from the N-terminus, the 699-residue chain is tRNA 5-methylaminomethyl-2-thiouridine biosynthesis bifunctional protein MnmC (699 aa).

Residues 1–260 form a tRNA (mnm(5)s(2)U34)-methyltransferase region; the sequence is MTAKPQKSCQ…ERKLLRQQAD (260 aa). The FAD-dependent cmnm(5)s(2)U34 oxidoreductase stretch occupies residues 282-699; sequence VGGGLASANL…LRKLLKGKAL (418 aa).

This sequence in the N-terminal section; belongs to the methyltransferase superfamily. tRNA (mnm(5)s(2)U34)-methyltransferase family. In the C-terminal section; belongs to the DAO family. FAD is required as a cofactor.

It localises to the cytoplasm. The catalysed reaction is 5-aminomethyl-2-thiouridine(34) in tRNA + S-adenosyl-L-methionine = 5-methylaminomethyl-2-thiouridine(34) in tRNA + S-adenosyl-L-homocysteine + H(+). In terms of biological role, catalyzes the last two steps in the biosynthesis of 5-methylaminomethyl-2-thiouridine (mnm(5)s(2)U) at the wobble position (U34) in tRNA. Catalyzes the FAD-dependent demodification of cmnm(5)s(2)U34 to nm(5)s(2)U34, followed by the transfer of a methyl group from S-adenosyl-L-methionine to nm(5)s(2)U34, to form mnm(5)s(2)U34. This Shewanella sp. (strain MR-4) protein is tRNA 5-methylaminomethyl-2-thiouridine biosynthesis bifunctional protein MnmC.